The sequence spans 84 residues: MAHKKAGGSSKNGRDSAGKRLGVKRFGGQQVTAGSILVRQRGTTIHPGANVGCGKDYTLYALVDGVVSFERKGKDKKKVSVYAQ.

Residues 1-25 form a disordered region; that stretch reads MAHKKAGGSSKNGRDSAGKRLGVKR.

The protein belongs to the bacterial ribosomal protein bL27 family.

The polypeptide is Large ribosomal subunit protein bL27 (Syntrophotalea carbinolica (strain DSM 2380 / NBRC 103641 / GraBd1) (Pelobacter carbinolicus)).